The chain runs to 117 residues: Large ribosomal subunit protein bL20c (117 aa).

It belongs to the bacterial ribosomal protein bL20 family.

Its subcellular location is the plastid. It localises to the chloroplast. Binds directly to 23S ribosomal RNA and is necessary for the in vitro assembly process of the 50S ribosomal subunit. It is not involved in the protein synthesizing functions of that subunit. The protein is Large ribosomal subunit protein bL20c (rpl20) of Arabidopsis thaliana (Mouse-ear cress).